We begin with the raw amino-acid sequence, 79 residues long: Defensin-like protein 3 (79 aa).

Positions 1 to 29 (MAKFASIVALLFAALVVFAAFEAPTVVEA) are cleaved as a signal peptide. 4 disulfides stabilise this stretch: Cys-32-Cys-79, Cys-43-Cys-64, Cys-49-Cys-73, and Cys-53-Cys-75.

This sequence belongs to the DEFL family.

Its subcellular location is the secreted. Its function is as follows. Possesses antifungal activity sensitive to inorganic cations. The polypeptide is Defensin-like protein 3 (AFP3) (Raphanus sativus (Radish)).